We begin with the raw amino-acid sequence, 325 residues long: Zinc metalloproteinase/disintegrin (325 aa).

A propeptide spanning residues K1 to E39 is cleaved from the precursor. Q40 is subject to Pyrrolidone carboxylic acid. In terms of domain architecture, Peptidase M12B spans R46–P242. Residue H182 participates in Zn(2+) binding. E183 is an active-site residue. Positions 186 and 192 each coordinate Zn(2+). 2 cysteine pairs are disulfide-bonded: C197–C221 and C199–C204. A propeptide spanning residues L243–L257 is cleaved from the precursor. The Disintegrin domain maps to T250 to F322. Q258 bears the Pyrrolidone carboxylic acid mark. Cystine bridges form between C264–C287, C278–C284, C283–C308, and C296–C315. Residues R300–D302 carry the Cell attachment site motif.

The protein belongs to the venom metalloproteinase (M12B) family. P-II subfamily. P-IIe sub-subfamily. As to quaternary structure, heterodimer of bitisgabonin and gabonin-1 (bitisgabonin-1) or gabonin-2 (bitisgabonin-2); disulfide-linked. Zn(2+) is required as a cofactor. In terms of tissue distribution, expressed by the venom gland.

It localises to the secreted. Functionally, impairs hemostasis in the envenomed animal. In dimer with gabonin-1 (bitisgabonin-1), is a potent inhibitor of the adhesion of the RGD-dependent integrin alpha-5/beta-1 (ITGA5/ITGB1) to immobilized fibronectin. In terms of biological role, in dimer with gabonin-2 (bitisgabonin-2), preferentially inhibits the adhesion of the alpha-4/beta-1 (ITGA4/ITGB1) and alpha-9/beta-1 (ITGA9/ITGB1) integrins to VCAM-1 and also acts as a strong antagonist of alpha-5/beta-1 (ITGA5/ITGB1). This chain is Zinc metalloproteinase/disintegrin, found in Bitis gabonica (Gaboon adder).